A 364-amino-acid polypeptide reads, in one-letter code: NF-kappa-B inhibitor epsilon (364 aa).

The interval 1–108 (MSDARKGPDE…GSPLPPAGVL (108 aa)) is disordered. S18 bears the Phosphoserine mark. Positions 36-48 (PGSGSSQSGCPQP) are enriched in low complexity. A compositionally biased stretch (basic and acidic residues) spans 51 to 70 (HAPETHKEPEKEDADGERAD). A compositionally biased stretch (pro residues) spans 93–104 (PSPPAPGSPLPP). ANK repeat units follow at residues 122 to 155 (DGDT…DIQN), 157 to 186 (LYQT…SRIL), 190 to 219 (HGDT…EPGR), 233 to 262 (QGLA…DIDV), 267 to 296 (SGKT…RVDA), and 300 to 329 (NGCT…DSLL).

Belongs to the NF-kappa-B inhibitor family. Interacts with RELA, REL, NFKB1 nuclear factor NF-kappa-B p50 subunit and NFKB2 nuclear factor NF-kappa-B p52 subunit. Interacts with HNRNPA2B1; the interaction may be mediated by the RRM2 domain of HNRNPA2B1, and HNRNPA2B1 may interact simultaneously with FAM76B and either NFKBIA or NFKBIE to form a complex. In terms of processing, serine phosphorylated; followed by proteasome-dependent degradation.

It localises to the cytoplasm. Functionally, sequesters NF-kappa-B transcription factor complexes in the cytoplasm, thereby inhibiting their activity. Sequestered complexes include NFKB1/p50-RELA/p65 and NFKB1/p50-REL/c-Rel complexes. Limits B-cell activation in response to pathogens, and also plays an important role in B-cell development. This chain is NF-kappa-B inhibitor epsilon (Nfkbie), found in Mus musculus (Mouse).